We begin with the raw amino-acid sequence, 443 residues long: Xaa-Pro dipeptidase (443 aa).

Mn(2+)-binding residues include aspartate 244, aspartate 255, histidine 336, glutamate 381, and glutamate 420.

This sequence belongs to the peptidase M24B family. Bacterial-type prolidase subfamily. Mn(2+) serves as cofactor.

It catalyses the reaction Xaa-L-Pro dipeptide + H2O = an L-alpha-amino acid + L-proline. In terms of biological role, splits dipeptides with a prolyl residue in the C-terminal position. In Stenotrophomonas maltophilia (strain K279a), this protein is Xaa-Pro dipeptidase.